The following is a 202-amino-acid chain: MKLLHIDSSILGDSSASRHVSAAAVAQFRKKDPSVEVISLDLASDPLPHLDVEALSWLGKDLTPDVSGRPELIAGANALKDFKAADIVVIGVPMYNLSIPSQLKAWIDRIMVAGQTFRYTSGGGIEGLAKGKKVVLAVARGGLYGEGSPAASFEHQLSYLKSVFAMIGITDLTVIEAEGLATNGGADRARILSDAEQKASAL.

FMN-binding positions include Ser9, 15 to 17, and 94 to 97; these read SAS and MYNL.

It belongs to the azoreductase type 1 family. As to quaternary structure, homodimer. FMN serves as cofactor.

The catalysed reaction is 2 a quinone + NADH + H(+) = 2 a 1,4-benzosemiquinone + NAD(+). It carries out the reaction N,N-dimethyl-1,4-phenylenediamine + anthranilate + 2 NAD(+) = 2-(4-dimethylaminophenyl)diazenylbenzoate + 2 NADH + 2 H(+). Quinone reductase that provides resistance to thiol-specific stress caused by electrophilic quinones. In terms of biological role, also exhibits azoreductase activity. Catalyzes the reductive cleavage of the azo bond in aromatic azo compounds to the corresponding amines. This chain is FMN-dependent NADH:quinone oxidoreductase, found in Gluconobacter oxydans (strain 621H) (Gluconobacter suboxydans).